A 297-amino-acid polypeptide reads, in one-letter code: Malonyl-[acyl-carrier protein] O-methyltransferase (297 aa).

Belongs to the methyltransferase superfamily.

It carries out the reaction malonyl-[ACP] + S-adenosyl-L-methionine = malonyl-[ACP] methyl ester + S-adenosyl-L-homocysteine. It functions in the pathway cofactor biosynthesis; biotin biosynthesis. In terms of biological role, converts the free carboxyl group of a malonyl-thioester to its methyl ester by transfer of a methyl group from S-adenosyl-L-methionine (SAM). It allows to synthesize pimeloyl-ACP via the fatty acid synthetic pathway. In Laribacter hongkongensis (strain HLHK9), this protein is Malonyl-[acyl-carrier protein] O-methyltransferase.